A 289-amino-acid polypeptide reads, in one-letter code: Diaminopimelate epimerase (289 aa).

Positions 11 and 78 each coordinate substrate. The Proton donor role is filled by C87. Substrate-binding positions include 88–89, N163, N199, and 217–218; these read GN and ER. C226 acts as the Proton acceptor in catalysis. 227 to 228 lines the substrate pocket; the sequence is GT.

Belongs to the diaminopimelate epimerase family. Homodimer.

The protein resides in the cytoplasm. It carries out the reaction (2S,6S)-2,6-diaminopimelate = meso-2,6-diaminopimelate. The protein operates within amino-acid biosynthesis; L-lysine biosynthesis via DAP pathway; DL-2,6-diaminopimelate from LL-2,6-diaminopimelate: step 1/1. In terms of biological role, catalyzes the stereoinversion of LL-2,6-diaminopimelate (L,L-DAP) to meso-diaminopimelate (meso-DAP), a precursor of L-lysine and an essential component of the bacterial peptidoglycan. In Mycobacterium bovis (strain ATCC BAA-935 / AF2122/97), this protein is Diaminopimelate epimerase.